The following is a 217-amino-acid chain: Small ribosomal subunit protein uS3 (217 aa).

One can recognise a KH type-2 domain in the interval 38–106 (IRKFLKKRLS…KVTLDIQEVR (69 aa)).

The protein belongs to the universal ribosomal protein uS3 family. In terms of assembly, part of the 30S ribosomal subunit. Forms a tight complex with proteins S10 and S14.

Binds the lower part of the 30S subunit head. Binds mRNA in the 70S ribosome, positioning it for translation. The sequence is that of Small ribosomal subunit protein uS3 from Desulfotalea psychrophila (strain LSv54 / DSM 12343).